The sequence spans 52 residues: uncharacterized protein (52 aa).

The interval 24–52 (LRENPSKNVRTIPDAGDENSSFGHARVIA) is disordered.

This is an uncharacterized protein from Treponema pallidum (strain Nichols).